A 706-amino-acid polypeptide reads, in one-letter code: Polyribonucleotide nucleotidyltransferase (706 aa).

Mg(2+) is bound by residues aspartate 487 and aspartate 493. In terms of domain architecture, KH spans 554-613 (PRIHTMKISSDKIKDVIGKGGAVIRALCEETGTTIEIEDDGTIKIAATEGAAAKEAIRRI). The S1 motif domain occupies 623–691 (GRIYQGKVAR…RQGRVRLSMK (69 aa)).

This sequence belongs to the polyribonucleotide nucleotidyltransferase family. In terms of assembly, component of the RNA degradosome, which is a multiprotein complex involved in RNA processing and mRNA degradation. It depends on Mg(2+) as a cofactor.

It is found in the cytoplasm. The catalysed reaction is RNA(n+1) + phosphate = RNA(n) + a ribonucleoside 5'-diphosphate. Functionally, involved in mRNA degradation. Catalyzes the phosphorolysis of single-stranded polyribonucleotides processively in the 3'- to 5'-direction. This is Polyribonucleotide nucleotidyltransferase from Vibrio atlanticus (strain LGP32) (Vibrio splendidus (strain Mel32)).